A 128-amino-acid chain; its full sequence is Ribosome-binding factor A (128 aa).

This sequence belongs to the RbfA family. In terms of assembly, monomer. Binds 30S ribosomal subunits, but not 50S ribosomal subunits or 70S ribosomes.

It localises to the cytoplasm. Its function is as follows. One of several proteins that assist in the late maturation steps of the functional core of the 30S ribosomal subunit. Associates with free 30S ribosomal subunits (but not with 30S subunits that are part of 70S ribosomes or polysomes). Required for efficient processing of 16S rRNA. May interact with the 5'-terminal helix region of 16S rRNA. This Microcystis aeruginosa (strain NIES-843 / IAM M-2473) protein is Ribosome-binding factor A.